We begin with the raw amino-acid sequence, 315 residues long: ATP synthase gamma chain (315 aa).

The protein belongs to the ATPase gamma chain family. F-type ATPases have 2 components, CF(1) - the catalytic core - and CF(0) - the membrane proton channel. CF(1) has five subunits: alpha(3), beta(3), gamma(1), delta(1), epsilon(1). CF(0) has three main subunits: a, b and c.

Its subcellular location is the cellular thylakoid membrane. Produces ATP from ADP in the presence of a proton gradient across the membrane. The gamma chain is believed to be important in regulating ATPase activity and the flow of protons through the CF(0) complex. The protein is ATP synthase gamma chain of Synechococcus sp. (strain RCC307).